Reading from the N-terminus, the 522-residue chain is Gypsy retrotransposon integrase-like protein 1 (522 aa).

Residues 135–292 (KVENPWSLVT…TPYFQMFSRN (158 aa)) form the Integrase catalytic domain. The residue at position 502 (Ser502) is a Phosphoserine.

As to expression, widely expressed. Also found in tumors originating from parathyroid gland, colon, stomach, bladder, uterus and prostate.

This Homo sapiens (Human) protein is Gypsy retrotransposon integrase-like protein 1 (GIN1).